The chain runs to 831 residues: Periplasmic nitrate reductase (831 aa).

The segment at residues 1 to 29 (MTVTRRDFVRHQALATAAAAAGVAVPAAA) is a signal peptide (tat-type signal). The 4Fe-4S Mo/W bis-MGD-type domain occupies 41-97 (LVWSKAPCRFCGTGCSVNVATKEGRVVATHGDIKSPVNRGLNCVKGYFLSKVMYGED). Residues Cys48, Cys51, Cys55, and Cys83 each coordinate [4Fe-4S] cluster. Residues Lys85, Gln152, Asn177, Cys181, 214–221 (WGSNMAEM), 245–249 (STYEH), 264–266 (QSD), Met375, Gln379, Asn485, 511–512 (SD), Lys534, Asp561, and 721–730 (TGRVIEHWHS) each bind Mo-bis(molybdopterin guanine dinucleotide). Residue Trp797 coordinates substrate. Mo-bis(molybdopterin guanine dinucleotide)-binding residues include Asn805 and Lys822.

Belongs to the prokaryotic molybdopterin-containing oxidoreductase family. NasA/NapA/NarB subfamily. Component of the periplasmic nitrate reductase NapAB complex composed of NapA and NapB. [4Fe-4S] cluster serves as cofactor. Mo-bis(molybdopterin guanine dinucleotide) is required as a cofactor. In terms of processing, predicted to be exported by the Tat system. The position of the signal peptide cleavage has not been experimentally proven.

Its subcellular location is the periplasm. It carries out the reaction 2 Fe(II)-[cytochrome] + nitrate + 2 H(+) = 2 Fe(III)-[cytochrome] + nitrite + H2O. Functionally, catalytic subunit of the periplasmic nitrate reductase complex NapAB. Receives electrons from NapB and catalyzes the reduction of nitrate to nitrite. The protein is Periplasmic nitrate reductase of Saccharophagus degradans (strain 2-40 / ATCC 43961 / DSM 17024).